Here is a 358-residue protein sequence, read N- to C-terminus: Chorismate synthase (358 aa).

Arg47 is an NADP(+) binding site. FMN-binding positions include 124 to 126, 240 to 241, Gly284, 299 to 303, and Arg325; these read RSS, NA, and KPVAT.

Belongs to the chorismate synthase family. In terms of assembly, homotetramer. Requires FMNH2 as cofactor.

It catalyses the reaction 5-O-(1-carboxyvinyl)-3-phosphoshikimate = chorismate + phosphate. It participates in metabolic intermediate biosynthesis; chorismate biosynthesis; chorismate from D-erythrose 4-phosphate and phosphoenolpyruvate: step 7/7. Functionally, catalyzes the anti-1,4-elimination of the C-3 phosphate and the C-6 proR hydrogen from 5-enolpyruvylshikimate-3-phosphate (EPSP) to yield chorismate, which is the branch point compound that serves as the starting substrate for the three terminal pathways of aromatic amino acid biosynthesis. This reaction introduces a second double bond into the aromatic ring system. This Bacteroides fragilis (strain YCH46) protein is Chorismate synthase.